Here is a 34-residue protein sequence, read N- to C-terminus: Photosystem II reaction center protein M (34 aa).

A helical transmembrane segment spans residues 5–25 (ILAFIATVLFILVPTAFLLII).

Belongs to the PsbM family. In terms of assembly, PSII is composed of 1 copy each of membrane proteins PsbA, PsbB, PsbC, PsbD, PsbE, PsbF, PsbH, PsbI, PsbJ, PsbK, PsbL, PsbM, PsbT, PsbX, PsbY, PsbZ, Psb30/Ycf12, at least 3 peripheral proteins of the oxygen-evolving complex and a large number of cofactors. It forms dimeric complexes.

Its subcellular location is the plastid. The protein localises to the chloroplast thylakoid membrane. One of the components of the core complex of photosystem II (PSII). PSII is a light-driven water:plastoquinone oxidoreductase that uses light energy to abstract electrons from H(2)O, generating O(2) and a proton gradient subsequently used for ATP formation. It consists of a core antenna complex that captures photons, and an electron transfer chain that converts photonic excitation into a charge separation. This subunit is found at the monomer-monomer interface. The protein is Photosystem II reaction center protein M of Piper cenocladum (Ant piper).